We begin with the raw amino-acid sequence, 217 residues long: Growth hormone variant (217 aa).

The N-terminal stretch at 1–26 (MAAGSRTSLLLAFGLLCLPWLQEGSA) is a signal peptide. Cystine bridges form between Cys-79–Cys-191 and Cys-208–Cys-215. Ser-132 carries the post-translational modification Phosphoserine. N-linked (GlcNAc...) asparagine glycosylation is present at Asn-166. Ser-176 bears the Phosphoserine mark.

Belongs to the somatotropin/prolactin family. As to expression, expressed in the placenta.

It is found in the secreted. Its function is as follows. Plays an important role in growth control. Its major role in stimulating body growth is to stimulate the liver and other tissues to secrete IGF1. It stimulates both the differentiation and proliferation of myoblasts. It also stimulates amino acid uptake and protein synthesis in muscle and other tissues. This Pan troglodytes (Chimpanzee) protein is Growth hormone variant (GH2).